Consider the following 501-residue polypeptide: Ribose import ATP-binding protein RbsA (501 aa).

2 consecutive ABC transporter domains span residues 5–241 and 252–495; these read LQLQ…VGRK and APGE…VGKQ. 37–44 is an ATP binding site; it reads GENGAGKS.

Belongs to the ABC transporter superfamily. Ribose importer (TC 3.A.1.2.1) family. As to quaternary structure, the complex is composed of an ATP-binding protein (RbsA), two transmembrane proteins (RbsC) and a solute-binding protein (RbsB).

The protein resides in the cell inner membrane. It carries out the reaction D-ribose(out) + ATP + H2O = D-ribose(in) + ADP + phosphate + H(+). Part of the ABC transporter complex RbsABC involved in ribose import. Responsible for energy coupling to the transport system. The sequence is that of Ribose import ATP-binding protein RbsA from Pectobacterium atrosepticum (strain SCRI 1043 / ATCC BAA-672) (Erwinia carotovora subsp. atroseptica).